The following is a 1218-amino-acid chain: NACHT, LRR and PYD domains-containing protein 1a allele 4 (1218 aa).

A compositionally biased stretch (polar residues) spans 1–29 (MGESQSKQESNTRVAQHGSQQDVDPTFQT). 2 disordered regions span residues 1 to 44 (MGES…QVEQ) and 71 to 91 (EMDHESRRHSHQSKKKLDRSE). Positions 77–87 (RRHSHQSKKKL) are enriched in basic residues. The 310-residue stretch at 175-484 (QLVIIEGAAG…EFFAAMSYIL (310 aa)) folds into the NACHT domain. 181–188 (GAAGIGKS) is an ATP binding site. 3 LRR repeats span residues 343-364 (KERNTIIDFNLIGSIPVLLTLC), 673-693 (NLEELDLSGNPLSYSAVRSLC), and 730-750 (RLAELDLRLNDLGDNGVRQLC). The segment covering 799–815 (TMPTENTDGEESLTSSK) has biased composition (polar residues). The disordered stretch occupies residues 799–842 (TMPTENTDGEESLTSSKQQQQQSGDKHMEPLGTDDDFWGPSGPV). The tract at residues 835–968 (FWGPSGPVST…HFAVLENPSF (134 aa)) is ZU5. Positions 835–1118 (FWGPSGPVST…LRPALPRMAS (284 aa)) constitute an FIIND domain. Residues 969 to 1118 (SPMGVLLRMI…LRPALPRMAS (150 aa)) form a UPA region. The 90-residue stretch at 1122-1211 (DAPALLHFVD…HLIMDLLEKS (90 aa)) folds into the CARD domain.

This sequence belongs to the NLRP family. In terms of assembly, interacts (via LRR repeats) with BCL2 and BCL2L1 (via the loop between motifs BH4 and BH3). Interacts with NOD2; this interaction is enhanced in the presence of muramyl dipeptide (MDP) and increases IL1B release. Interacts with EIF2AK2/PKR; this interaction requires EIF2AK2 activity, is accompanied by EIF2AK2 autophosphorylation and promotes inflammasome assembly in response to danger-associated signals. Interacts with MEFV; this interaction targets Nlrp1a to degradation by autophagy, hence preventing excessive IL1B- and IL18-mediated inflammation. Interacts with DPP9; leading to inhibit activation of the inflammasome. DPP9 acts via formation of a ternary complex, composed of a DPP9 homodimer, one full-length NLRP1 protein, and one cleaved C-terminus of Nlrp1a (NACHT, LRR and PYD domains-containing protein 1a, C-terminus). Interacts with DPP8; leading to inhibit activation of the inflammasome, probably via formation of a ternary complex with DPP8. As to quaternary structure, interacts with the C-terminal part of Nlrp1a (NACHT, LRR and PYD domains-containing protein 1a, C-terminus) in absence of pathogens and other damage-associated signals. Interacts with the N-terminal part of Nlrp1a (NACHT, LRR and PYD domains-containing protein 1a, N-terminus) in absence of pathogens and other damage-associated signals. Homomultimer; forms the Nlrp1a inflammasome polymeric complex, a filament composed of homopolymers of this form in response to pathogens and other damage-associated signals. The Nlrp1a inflammasome polymeric complex directly recruits pro-caspase-1 (proCASP1) independently of PYCARD/ASC. Interacts (via CARD domain) with CASP1 (via CARD domain); leading to CASP1 activation. Post-translationally, autocatalytically cleaved. Autocatalytic cleavage in FIIND region occurs constitutively, prior to activation signals, and is required for inflammasome activity (IL1B release), possibly by facilitating CASP1 binding. Both N- and C-terminal parts remain associated non-covalently. Ubiquitinated in response to pathogen-associated signals, leading to its degradation by the proteasome and subsequent release of the cleaved C-terminal part of the protein (NACHT, LRR and PYD domains-containing protein 1a, C-terminus), which polymerizes and forms the Nlrp1a inflammasome.

Its subcellular location is the cytoplasm. It localises to the cytosol. The protein localises to the nucleus. It is found in the inflammasome. Its activity is regulated as follows. Activated by pathogens and other damage-associated signals: activation promotes ubiquitination and degradation of the N-terminal part, releasing the cleaved C-terminal part of the protein (NACHT, LRR and PYD domains-containing protein 1a, C-terminus), which polymerizes and forms the Nlrp1a inflammasome. Nlrp1a inflammasome is inhibited by DPP8 and DPP9, which sequester the C-terminal fragment of Nlrp1a (NACHT, LRR and PYD domains-containing protein 1a, C-terminus) in a ternary complex, thereby preventing Nlrp1a oligomerization and activation. Nlrp1a inflammasome is strongly activated by Val-boroPro (Talabostat, PT-100), an inhibitor of dipeptidyl peptidases DPP8 and DPP9. Val-boroPro relieves inhibition of DPP8 and/or DPP9 by promoting disruption of the ternary complex, releasing its C-terminal part from autoinhibition. Not activated by cleavage by B.anthracis lethal toxin (LT) endopeptidase. Functionally, acts as the sensor component of the Nlrp1a inflammasome, which mediates inflammasome activation in response to various pathogen-associated signals, leading to subsequent pyroptosis. Inflammasomes are supramolecular complexes that assemble in the cytosol in response to pathogens and other damage-associated signals and play critical roles in innate immunity and inflammation. Acts as a recognition receptor (PRR): recognizes specific pathogens and other damage-associated signals, such as Val-boroPro inhibitor, and mediates the formation of the inflammasome polymeric complex. In response to pathogen-associated signals, the N-terminal part of Nlrp1a is degraded by the proteasome, releasing the cleaved C-terminal part of the protein (NACHT, LRR and PYD domains-containing protein 1a, C-terminus), which polymerizes to initiate the formation of the inflammasome complex: the inflammasome directly recruits pro-caspase-1 (proCASP1) independently of PYCARD/ASC and promotes caspase-1 (CASP1) activation, which subsequently cleaves and activates inflammatory cytokines IL1B and IL18 and gasdermin-D (GSDMD), leading to pyroptosis. In the absence of GSDMD expression, the Nlrp1a inflammasome is able to recruit and activate CASP8, leading to activation of gasdermin-E (GSDME). In terms of biological role, constitutes the precursor of the Nlrp1a inflammasome, which mediates autoproteolytic processing within the FIIND domain to generate the N-terminal and C-terminal parts, which are associated non-covalently in absence of pathogens and other damage-associated signals. Regulatory part that prevents formation of the Nlrp1a inflammasome: in absence of pathogens and other damage-associated signals, interacts with the C-terminal part of Nlrp1a (NACHT, LRR and PYD domains-containing protein 1a, C-terminus), preventing activation of the Nlrp1a inflammasome. In response to pathogen-associated signals, this part is ubiquitinated by the N-end rule pathway and degraded by the proteasome, releasing the cleaved C-terminal part of the protein, which polymerizes and forms the Nlrp1a inflammasome. Its function is as follows. Constitutes the active part of the Nlrp1a inflammasome. In absence of pathogens and other damage-associated signals, interacts with the N-terminal part of Nlrp1a (NACHT, LRR and PYD domains-containing protein 1a, N-terminus), preventing activation of the Nlrp1a inflammasome. In response to pathogen-associated signals, the N-terminal part of Nlrp1a is degraded by the proteasome, releasing this form, which polymerizes to form the Nlrp1a inflammasome complex: the Nlrp1a inflammasome complex then directly recruits pro-caspase-1 (proCASP1) and promotes caspase-1 (CASP1) activation, leading to gasdermin-D (GSDMD) cleavage and subsequent pyroptosis. In Rattus norvegicus (Rat), this protein is NACHT, LRR and PYD domains-containing protein 1a allele 4.